We begin with the raw amino-acid sequence, 228 residues long: Orotidine 5'-phosphate decarboxylase (228 aa).

Substrate-binding positions include Asp10, Lys33, 60-69, Thr116, Arg178, Gln187, Gly207, and Arg208; that span reads DLKLYDIPHT. The Proton donor role is filled by Lys62.

Belongs to the OMP decarboxylase family. Type 1 subfamily. In terms of assembly, homodimer.

It catalyses the reaction orotidine 5'-phosphate + H(+) = UMP + CO2. The protein operates within pyrimidine metabolism; UMP biosynthesis via de novo pathway; UMP from orotate: step 2/2. Its function is as follows. Catalyzes the decarboxylation of orotidine 5'-monophosphate (OMP) to uridine 5'-monophosphate (UMP). The sequence is that of Orotidine 5'-phosphate decarboxylase from Oenococcus oeni (strain ATCC BAA-331 / PSU-1).